We begin with the raw amino-acid sequence, 281 residues long: 4-hydroxy-3-methylbut-2-enyl diphosphate reductase (281 aa).

Cysteine 12 contributes to the [4Fe-4S] cluster binding site. (2E)-4-hydroxy-3-methylbut-2-enyl diphosphate-binding residues include histidine 41 and histidine 74. Dimethylallyl diphosphate contacts are provided by histidine 41 and histidine 74. Isopentenyl diphosphate contacts are provided by histidine 41 and histidine 74. Cysteine 96 lines the [4Fe-4S] cluster pocket. Histidine 124 contributes to the (2E)-4-hydroxy-3-methylbut-2-enyl diphosphate binding site. Histidine 124 provides a ligand contact to dimethylallyl diphosphate. Histidine 124 contributes to the isopentenyl diphosphate binding site. Catalysis depends on glutamate 126, which acts as the Proton donor. Threonine 164 contributes to the (2E)-4-hydroxy-3-methylbut-2-enyl diphosphate binding site. Position 193 (cysteine 193) interacts with [4Fe-4S] cluster. The (2E)-4-hydroxy-3-methylbut-2-enyl diphosphate site is built by serine 221, asparagine 223, and serine 265. Dimethylallyl diphosphate is bound by residues serine 221, asparagine 223, and serine 265. Isopentenyl diphosphate contacts are provided by serine 221, asparagine 223, and serine 265.

The protein belongs to the IspH family. Requires [4Fe-4S] cluster as cofactor.

It carries out the reaction isopentenyl diphosphate + 2 oxidized [2Fe-2S]-[ferredoxin] + H2O = (2E)-4-hydroxy-3-methylbut-2-enyl diphosphate + 2 reduced [2Fe-2S]-[ferredoxin] + 2 H(+). It catalyses the reaction dimethylallyl diphosphate + 2 oxidized [2Fe-2S]-[ferredoxin] + H2O = (2E)-4-hydroxy-3-methylbut-2-enyl diphosphate + 2 reduced [2Fe-2S]-[ferredoxin] + 2 H(+). The protein operates within isoprenoid biosynthesis; dimethylallyl diphosphate biosynthesis; dimethylallyl diphosphate from (2E)-4-hydroxy-3-methylbutenyl diphosphate: step 1/1. It functions in the pathway isoprenoid biosynthesis; isopentenyl diphosphate biosynthesis via DXP pathway; isopentenyl diphosphate from 1-deoxy-D-xylulose 5-phosphate: step 6/6. In terms of biological role, catalyzes the conversion of 1-hydroxy-2-methyl-2-(E)-butenyl 4-diphosphate (HMBPP) into a mixture of isopentenyl diphosphate (IPP) and dimethylallyl diphosphate (DMAPP). Acts in the terminal step of the DOXP/MEP pathway for isoprenoid precursor biosynthesis. This Oleidesulfovibrio alaskensis (strain ATCC BAA-1058 / DSM 17464 / G20) (Desulfovibrio alaskensis) protein is 4-hydroxy-3-methylbut-2-enyl diphosphate reductase.